The sequence spans 683 residues: PTS system mannose-specific EIIBCA component (683 aa).

Residues 1–89 form the PTS EIIB type-1 domain; sequence MASKLTTTSQ…LKLDGMKHFA (89 aa). Cys-28 acts as the Phosphocysteine intermediate; for EIIB activity in catalysis. Residues 117-476 form the PTS EIIC type-1 domain; the sequence is EFLSDTFRPI…NEERDEARAK (360 aa). Transmembrane regions (helical) follow at residues 126 to 146, 162 to 182, 193 to 213, 225 to 245, 260 to 280, 303 to 323, 344 to 364, 376 to 396, 409 to 429, and 442 to 462; these read ILWA…ADTF, YVFL…MVGA, WIGA…LGSA, VLND…GLYW, MVFV…FLLG, FILS…GLHW, PMGA…LLSI, LGGM…YGVL, GCLA…AFVF, and LGYT…VLAL. The PTS EIIA type-1 domain occupies 550 to 654; it reads DPIFAAGKLG…PLITPVVVSN (105 aa). Catalysis depends on His-602, which acts as the Tele-phosphohistidine intermediate; for EIIA activity.

It is found in the cell membrane. It carries out the reaction D-mannose(out) + N(pros)-phospho-L-histidyl-[protein] = D-mannose 6-phosphate(in) + L-histidyl-[protein]. Its function is as follows. The phosphoenolpyruvate-dependent sugar phosphotransferase system (sugar PTS), a major carbohydrate active -transport system, catalyzes the phosphorylation of incoming sugar substrates concomitantly with their translocation across the cell membrane. This system is involved in mannose transport. The chain is PTS system mannose-specific EIIBCA component (ptsM) from Corynebacterium glutamicum (strain ATCC 13032 / DSM 20300 / JCM 1318 / BCRC 11384 / CCUG 27702 / LMG 3730 / NBRC 12168 / NCIMB 10025 / NRRL B-2784 / 534).